A 469-amino-acid polypeptide reads, in one-letter code: Cysteine--tRNA ligase (469 aa).

Cys-29 provides a ligand contact to Zn(2+). A 'HIGH' region motif is present at residues 31-41 (PTVYNYIHIGN). Zn(2+)-binding residues include Cys-210, His-235, and Glu-239. A 'KMSKS' region motif is present at residues 267-271 (KMSKS). Lys-270 contributes to the ATP binding site.

It belongs to the class-I aminoacyl-tRNA synthetase family. In terms of assembly, monomer. Zn(2+) serves as cofactor.

The protein resides in the cytoplasm. It catalyses the reaction tRNA(Cys) + L-cysteine + ATP = L-cysteinyl-tRNA(Cys) + AMP + diphosphate. This chain is Cysteine--tRNA ligase, found in Thermosipho melanesiensis (strain DSM 12029 / CIP 104789 / BI429).